A 130-amino-acid polypeptide reads, in one-letter code: MAQVQYYGTGRRKHSVARVRLVPGDGNIVINGRSLDEYFGLETLKLIVKQPLVETGTEGQYDVRVNVDGGGFTGQAGAIRHGIARALLQVDPEYRPSLKSAGFLTRDARMKERKKYGLKAARRAPQFSKR.

This sequence belongs to the universal ribosomal protein uS9 family.

This chain is Small ribosomal subunit protein uS9, found in Halalkalibacterium halodurans (strain ATCC BAA-125 / DSM 18197 / FERM 7344 / JCM 9153 / C-125) (Bacillus halodurans).